Consider the following 653-residue polypeptide: Endoglin (653 aa).

An N-terminal signal peptide occupies residues 1-26 (MDRGVLPLPITLLFVIYSFVPTTGLA). The segment at 27 to 47 (ERVGCDLQPVDPTRGEVTFTT) is OR1, N-terminal part. Residues 27–337 (ERVGCDLQPV…SSCGGVFQTT (311 aa)) form a required for interaction with GDF2 region. The Extracellular portion of the chain corresponds to 27 to 581 (ERVGCDLQPV…IVSPDLSGKG (555 aa)). Disulfide bonds link C31/C209, C54/C184, C244/C330, C350/C382, C363/C442, C394/C412, and C493/C549. Residues 48-201 (SQVSEGCVAQ…MGATLEWQPR (154 aa)) form an OR2 region. 3 N-linked (GlcNAc...) asparagine glycosylation sites follow: N89, N135, and N266. Positions 202–330 (AQTPVQSCRL…SNVSLRASSC (129 aa)) are OR1, C-terminal part. An essential for interaction with GDF2 region spans residues 270–282 (QILTTGEYSVKIF). N307 and N322 each carry an N-linked (GlcNAc...) asparagine glycan. Residues 363-510 (CGNQVMTLAL…GDMVELIQSR (148 aa)) form the ZP domain. Residues 582-606 (LVLPSVLGITFGAFLIGALLTAALW) form a helical membrane-spanning segment. Residues 607–653 (YIYSHTRGPSKREPVVAVAAPASSESSSTNHSIGSTQSTPCSTSSMA) are Cytoplasmic-facing. Low complexity predominate over residues 624–634 (VAAPASSESSS). The segment at 624 to 653 (VAAPASSESSSTNHSIGSTQSTPCSTSSMA) is disordered. Polar residues predominate over residues 635 to 653 (TNHSIGSTQSTPCSTSSMA). S641 and S644 each carry phosphoserine; by TGFBR1.

In terms of assembly, homodimer; disulfide-linked. Forms a heteromeric complex with the signaling receptors for transforming growth factor-beta: TGFBR1 and/or TGFBR2. Interacts with TGFB1. It is able to bind TGFB1 and TGFB2 with high affinity, but not TGFB3. Interacts with GDF2, forming a heterotetramer with a 2:2 stoichiometry. Interacts with ACVRL1. Can form a heteromeric complex with GDF2 and ACVRL1. Interacts with BMP10. Interacts with DYNLT4. Interacts with ARRB2. As to expression, detected on blood vessels (at protein level). Detected on adult pulmonary artery, capillaries supporting the heart muscle and lung alveolar capillary endothelial cells. Endoglin is restricted to endothelial cells in all tissues except bone marrow and is also found in stromal cells within the connective tissue of intestine, stomach, heart, skeletal muscle, uterus, ovary, oviduct, testis and thymus.

Its subcellular location is the cell membrane. Its function is as follows. Vascular endothelium glycoprotein that plays an important role in the regulation of angiogenesis. Required for normal structure and integrity of adult vasculature. Regulates the migration of vascular endothelial cells. Required for normal extraembryonic angiogenesis and for embryonic heart development. May regulate endothelial cell shape changes in response to blood flow, which drive vascular remodeling and establishment of normal vascular morphology during angiogenesis. May play a role in the binding of endothelial cells to integrins. Acts as a TGF-beta coreceptor and is involved in the TGF-beta/BMP signaling cascade that ultimately leads to the activation of SMAD transcription factors. Required for GDF2/BMP9 signaling through SMAD1 in endothelial cells and modulates TGFB1 signaling through SMAD3. This chain is Endoglin (Eng), found in Mus musculus (Mouse).